The sequence spans 705 residues: Elongation factor G (705 aa).

Residues 8-290 (HRYRNIGIMA…GVIHLLPSPA (283 aa)) form the tr-type G domain. Residues 17–24 (AHIDAGKT), 88–92 (DTPGH), and 142–145 (NKMD) contribute to the GTP site.

This sequence belongs to the TRAFAC class translation factor GTPase superfamily. Classic translation factor GTPase family. EF-G/EF-2 subfamily.

The protein resides in the cytoplasm. Functionally, catalyzes the GTP-dependent ribosomal translocation step during translation elongation. During this step, the ribosome changes from the pre-translocational (PRE) to the post-translocational (POST) state as the newly formed A-site-bound peptidyl-tRNA and P-site-bound deacylated tRNA move to the P and E sites, respectively. Catalyzes the coordinated movement of the two tRNA molecules, the mRNA and conformational changes in the ribosome. This Xylella fastidiosa (strain 9a5c) protein is Elongation factor G.